The chain runs to 471 residues: 3-isopropylmalate dehydratase large subunit (471 aa).

[4Fe-4S] cluster-binding residues include C347, C407, and C410.

This sequence belongs to the aconitase/IPM isomerase family. LeuC type 1 subfamily. As to quaternary structure, heterodimer of LeuC and LeuD. [4Fe-4S] cluster is required as a cofactor.

It carries out the reaction (2R,3S)-3-isopropylmalate = (2S)-2-isopropylmalate. It functions in the pathway amino-acid biosynthesis; L-leucine biosynthesis; L-leucine from 3-methyl-2-oxobutanoate: step 2/4. Catalyzes the isomerization between 2-isopropylmalate and 3-isopropylmalate, via the formation of 2-isopropylmaleate. This is 3-isopropylmalate dehydratase large subunit from Granulibacter bethesdensis (strain ATCC BAA-1260 / CGDNIH1).